Reading from the N-terminus, the 151-residue chain is Large ribosomal subunit protein bL9 (151 aa).

This sequence belongs to the bacterial ribosomal protein bL9 family.

Binds to the 23S rRNA. The chain is Large ribosomal subunit protein bL9 from Chlorobium limicola (strain DSM 245 / NBRC 103803 / 6330).